A 287-amino-acid polypeptide reads, in one-letter code: Ribosomal RNA small subunit methyltransferase I (287 aa).

It belongs to the methyltransferase superfamily. RsmI family.

It is found in the cytoplasm. It catalyses the reaction cytidine(1402) in 16S rRNA + S-adenosyl-L-methionine = 2'-O-methylcytidine(1402) in 16S rRNA + S-adenosyl-L-homocysteine + H(+). Functionally, catalyzes the 2'-O-methylation of the ribose of cytidine 1402 (C1402) in 16S rRNA. The protein is Ribosomal RNA small subunit methyltransferase I of Streptococcus pyogenes serotype M6 (strain ATCC BAA-946 / MGAS10394).